The following is a 440-amino-acid chain: 3-phosphoshikimate 1-carboxyvinyltransferase (440 aa).

3-phosphoshikimate is bound by residues lysine 31, serine 32, and arginine 36. Lysine 31 provides a ligand contact to phosphoenolpyruvate. Residues glycine 104 and arginine 133 each coordinate phosphoenolpyruvate. The 3-phosphoshikimate site is built by serine 178, glutamine 180, aspartate 328, and lysine 355. Residue glutamine 180 coordinates phosphoenolpyruvate. Residue aspartate 328 is the Proton acceptor of the active site. Phosphoenolpyruvate is bound by residues arginine 359 and arginine 401.

This sequence belongs to the EPSP synthase family. As to quaternary structure, monomer.

It localises to the cytoplasm. It catalyses the reaction 3-phosphoshikimate + phosphoenolpyruvate = 5-O-(1-carboxyvinyl)-3-phosphoshikimate + phosphate. It participates in metabolic intermediate biosynthesis; chorismate biosynthesis; chorismate from D-erythrose 4-phosphate and phosphoenolpyruvate: step 6/7. Its function is as follows. Catalyzes the transfer of the enolpyruvyl moiety of phosphoenolpyruvate (PEP) to the 5-hydroxyl of shikimate-3-phosphate (S3P) to produce enolpyruvyl shikimate-3-phosphate and inorganic phosphate. This chain is 3-phosphoshikimate 1-carboxyvinyltransferase, found in Thermosynechococcus vestitus (strain NIES-2133 / IAM M-273 / BP-1).